A 459-amino-acid polypeptide reads, in one-letter code: Chromosomal replication initiator protein DnaA (459 aa).

A domain I, interacts with DnaA modulators region spans residues methionine 1–glutamate 83. The tract at residues glutamate 83 to glycine 121 is domain II. Positions glutamine 122–alanine 338 are domain III, AAA+ region. ATP contacts are provided by glycine 166, glycine 168, lysine 169, and threonine 170. Positions lysine 339 to asparagine 459 are domain IV, binds dsDNA.

Belongs to the DnaA family. In terms of assembly, oligomerizes as a right-handed, spiral filament on DNA at oriC.

It is found in the cytoplasm. In terms of biological role, plays an essential role in the initiation and regulation of chromosomal replication. ATP-DnaA binds to the origin of replication (oriC) to initiate formation of the DNA replication initiation complex once per cell cycle. Binds the DnaA box (a 9 base pair repeat at the origin) and separates the double-stranded (ds)DNA. Forms a right-handed helical filament on oriC DNA; dsDNA binds to the exterior of the filament while single-stranded (ss)DNA is stabiized in the filament's interior. The ATP-DnaA-oriC complex binds and stabilizes one strand of the AT-rich DNA unwinding element (DUE), permitting loading of DNA polymerase. After initiation quickly degrades to an ADP-DnaA complex that is not apt for DNA replication. Binds acidic phospholipids. The sequence is that of Chromosomal replication initiator protein DnaA from Exiguobacterium sp. (strain ATCC BAA-1283 / AT1b).